Consider the following 429-residue polypeptide: Probable M18 family aminopeptidase 2 (429 aa).

Zn(2+) contacts are provided by His82, His156, and His401.

It belongs to the peptidase M18 family. It depends on Zn(2+) as a cofactor.

This is Probable M18 family aminopeptidase 2 from Pseudomonas putida (strain ATCC 47054 / DSM 6125 / CFBP 8728 / NCIMB 11950 / KT2440).